Here is a 321-residue protein sequence, read N- to C-terminus: Aspartate carbamoyltransferase catalytic subunit (321 aa).

Residues R65 and T66 each coordinate carbamoyl phosphate. K93 contacts L-aspartate. 3 residues coordinate carbamoyl phosphate: R115, H143, and Q146. R176 and R230 together coordinate L-aspartate. Residues G271 and P272 each coordinate carbamoyl phosphate.

This sequence belongs to the aspartate/ornithine carbamoyltransferase superfamily. ATCase family. As to quaternary structure, heterododecamer (2C3:3R2) of six catalytic PyrB chains organized as two trimers (C3), and six regulatory PyrI chains organized as three dimers (R2).

It catalyses the reaction carbamoyl phosphate + L-aspartate = N-carbamoyl-L-aspartate + phosphate + H(+). The protein operates within pyrimidine metabolism; UMP biosynthesis via de novo pathway; (S)-dihydroorotate from bicarbonate: step 2/3. Catalyzes the condensation of carbamoyl phosphate and aspartate to form carbamoyl aspartate and inorganic phosphate, the committed step in the de novo pyrimidine nucleotide biosynthesis pathway. The protein is Aspartate carbamoyltransferase catalytic subunit of Bartonella bacilliformis (strain ATCC 35685 / KC583 / Herrer 020/F12,63).